A 207-amino-acid chain; its full sequence is Holliday junction branch migration complex subunit RuvA (207 aa).

The tract at residues 1–68 (MIGYLQGSLA…EDQWLLFGFL (68 aa)) is domain I. Residues 69-147 (QMAERDLFRQ…EWREEAGLLP (79 aa)) are domain II. A flexible linker region spans residues 148–158 (SATAAPIAAVQ). The tract at residues 158 to 207 (QEDVEMTLLALGYNNREILQALTAIAQENLVQSGQPAEDWIREAIAWLSR) is domain III.

It belongs to the RuvA family. Homotetramer. Forms an RuvA(8)-RuvB(12)-Holliday junction (HJ) complex. HJ DNA is sandwiched between 2 RuvA tetramers; dsDNA enters through RuvA and exits via RuvB. An RuvB hexamer assembles on each DNA strand where it exits the tetramer. Each RuvB hexamer is contacted by two RuvA subunits (via domain III) on 2 adjacent RuvB subunits; this complex drives branch migration. In the full resolvosome a probable DNA-RuvA(4)-RuvB(12)-RuvC(2) complex forms which resolves the HJ.

It localises to the cytoplasm. The RuvA-RuvB-RuvC complex processes Holliday junction (HJ) DNA during genetic recombination and DNA repair, while the RuvA-RuvB complex plays an important role in the rescue of blocked DNA replication forks via replication fork reversal (RFR). RuvA specifically binds to HJ cruciform DNA, conferring on it an open structure. The RuvB hexamer acts as an ATP-dependent pump, pulling dsDNA into and through the RuvAB complex. HJ branch migration allows RuvC to scan DNA until it finds its consensus sequence, where it cleaves and resolves the cruciform DNA. The chain is Holliday junction branch migration complex subunit RuvA from Synechococcus elongatus (strain ATCC 33912 / PCC 7942 / FACHB-805) (Anacystis nidulans R2).